The sequence spans 550 residues: Hydroxylamine reductase (550 aa).

[4Fe-4S] cluster-binding residues include Cys-5, Cys-8, Cys-17, and Cys-23. His-250, Glu-274, Cys-319, Cys-405, Cys-433, Cys-458, Glu-492, and Lys-494 together coordinate hybrid [4Fe-2O-2S] cluster. Position 405 is a cysteine persulfide (Cys-405).

This sequence belongs to the HCP family. [4Fe-4S] cluster serves as cofactor. Hybrid [4Fe-2O-2S] cluster is required as a cofactor.

It is found in the cytoplasm. It catalyses the reaction A + NH4(+) + H2O = hydroxylamine + AH2 + H(+). Functionally, catalyzes the reduction of hydroxylamine to form NH(3) and H(2)O. The sequence is that of Hydroxylamine reductase from Geobacter sulfurreducens (strain ATCC 51573 / DSM 12127 / PCA).